The primary structure comprises 158 residues: SsrA-binding protein (158 aa).

This sequence belongs to the SmpB family.

The protein resides in the cytoplasm. Required for rescue of stalled ribosomes mediated by trans-translation. Binds to transfer-messenger RNA (tmRNA), required for stable association of tmRNA with ribosomes. tmRNA and SmpB together mimic tRNA shape, replacing the anticodon stem-loop with SmpB. tmRNA is encoded by the ssrA gene; the 2 termini fold to resemble tRNA(Ala) and it encodes a 'tag peptide', a short internal open reading frame. During trans-translation Ala-aminoacylated tmRNA acts like a tRNA, entering the A-site of stalled ribosomes, displacing the stalled mRNA. The ribosome then switches to translate the ORF on the tmRNA; the nascent peptide is terminated with the 'tag peptide' encoded by the tmRNA and targeted for degradation. The ribosome is freed to recommence translation, which seems to be the essential function of trans-translation. The polypeptide is SsrA-binding protein (Bifidobacterium longum (strain DJO10A)).